Consider the following 60-residue polypeptide: Naniproin (60 aa).

Intrachain disulfides connect Cys3–Cys21, Cys14–Cys38, Cys42–Cys53, and Cys54–Cys59.

Belongs to the three-finger toxin family. Short-chain subfamily. Type IA cytotoxin sub-subfamily. Monomer in solution; Homodimer and oligomer in the presence of negatively charged lipids forming a pore with a size ranging between 20 and 30 angstroms. In terms of tissue distribution, expressed by the venom gland.

The protein localises to the secreted. It is found in the target cell membrane. Functionally, basic protein that binds to cell membrane and depolarizes cardiomyocytes. This cytotoxin also possesses lytic activity on many other cells, including red blood cells. Interaction with sulfatides in the cell membrane induces pore formation and cell internalization and is responsible for cytotoxicity in cardiomyocytes. It targets the mitochondrial membrane and induces mitochondrial swelling and fragmentation. Inhibits protein kinases C. It binds to the integrin alpha-V/beta-3 with a moderate affinity. The sequence is that of Naniproin from Naja nigricollis (Black-necked spitting cobra).